The following is a 584-amino-acid chain: Sulfite reductase [NADPH] hemoprotein beta-component (584 aa).

Positions 447, 453, 492, and 496 each coordinate [4Fe-4S] cluster. Position 496 (Cys496) interacts with siroheme.

The protein belongs to the nitrite and sulfite reductase 4Fe-4S domain family. As to quaternary structure, alpha(8)-beta(8). The alpha component is a flavoprotein, the beta component is a hemoprotein. Siroheme serves as cofactor. The cofactor is [4Fe-4S] cluster.

The catalysed reaction is hydrogen sulfide + 3 NADP(+) + 3 H2O = sulfite + 3 NADPH + 4 H(+). It functions in the pathway sulfur metabolism; hydrogen sulfide biosynthesis; hydrogen sulfide from sulfite (NADPH route): step 1/1. Component of the sulfite reductase complex that catalyzes the 6-electron reduction of sulfite to sulfide. This is one of several activities required for the biosynthesis of L-cysteine from sulfate. The sequence is that of Sulfite reductase [NADPH] hemoprotein beta-component from Colwellia psychrerythraea (strain 34H / ATCC BAA-681) (Vibrio psychroerythus).